Reading from the N-terminus, the 269-residue chain is JmjC domain-containing protein 8 (269 aa).

Residues methionine 1–proline 24 form the signal peptide. Residues asparagine 135, asparagine 145, and asparagine 214 are each glycosylated (N-linked (GlcNAc...) asparagine). Residues threonine 147 to glycine 269 enclose the JmjC domain.

As to quaternary structure, oligomer. Dimer. Interacts with PKM; regulates angiogenesis and metabolism. N-glycosylated.

The protein resides in the endoplasmic reticulum lumen. Its subcellular location is the cytoplasm. Functionally, functions as a positive regulator of TNF-induced NF-kappaB signaling. Regulates angiogenesis and cellular metabolism through interaction with PKM. The protein is JmjC domain-containing protein 8 of Rattus norvegicus (Rat).